A 158-amino-acid chain; its full sequence is Small ribosomal subunit protein uS9 (158 aa).

It belongs to the universal ribosomal protein uS9 family.

The protein is Small ribosomal subunit protein uS9 of Brucella canis (strain ATCC 23365 / NCTC 10854 / RM-666).